Here is a 363-residue protein sequence, read N- to C-terminus: Ribosome-binding ATPase YchF (363 aa).

Residues 3 to 256 form the OBG-type G domain; that stretch reads FKCGIVGLPN…LDDDEKIEFL (254 aa). Residue 12–17 participates in ATP binding; it reads NVGKST. Mg(2+) is bound by residues serine 16 and threonine 36. In terms of domain architecture, TGS spans 278 to 361; it reads NLQTYFTAGV…QDGDVMHFRF (84 aa).

The protein belongs to the TRAFAC class OBG-HflX-like GTPase superfamily. OBG GTPase family. YchF/OLA1 subfamily. Mg(2+) serves as cofactor.

Its function is as follows. ATPase that binds to both the 70S ribosome and the 50S ribosomal subunit in a nucleotide-independent manner. The protein is Ribosome-binding ATPase YchF of Pasteurella multocida (strain Pm70).